We begin with the raw amino-acid sequence, 872 residues long: Cellulose synthase catalytic subunit [UDP-forming] (872 aa).

4 helical membrane-spanning segments follow: residues 30–50, 151–171, 173–193, and 230–250; these read SAFSATLGCFWMILAWIFIPL, ILGIIVTFSLILALICVTQPF, PLAQFIFLMLLWGVALIVRRM, and LVCGLILLFAETYAWIVLVLG. A catalytic subdomain A region spans residues 271–364; sequence LWPSVDIFVP…FVSIFDCDHV (94 aa). Residue Asp313 is part of the active site. Substrate-binding residues include Asp360 and Asp362. Residues 441–501 form a catalytic subdomain B region; that stretch reads KPLDEIGGIA…GQRIRWARGM (61 aa). Asp457 is a catalytic residue. 5 helical membrane-spanning segments follow: residues 525–545, 547–567, 592–612, 640–660, and 668–688; these read VNAMFHFLSGIPRLIFLTAPL, FLLLHAYIIYAPALMIALFVL, IYETVLAWYIAPPTLVALINP, IFLVLLNLVGVAVGIWRYFYG, and VVVSMVWVFYNLIVLGGAVAV. The 97-residue stretch at 694–790 folds into the PilZ domain; the sequence is QVRRSHRVEM…QHIDFVQCTF (97 aa). Residues 833–853 traverse the membrane as a helical segment; sequence SVKGIFRVLTSLVSWVVSFIP.

This sequence belongs to the glycosyltransferase 2 family. The cofactor is Mg(2+).

It is found in the cell inner membrane. It catalyses the reaction [(1-&gt;4)-beta-D-glucosyl](n) + UDP-alpha-D-glucose = [(1-&gt;4)-beta-D-glucosyl](n+1) + UDP + H(+). The protein operates within glycan metabolism; bacterial cellulose biosynthesis. Activated by bis-(3'-5') cyclic diguanylic acid (c-di-GMP). Functionally, catalytic subunit of cellulose synthase. It polymerizes uridine 5'-diphosphate glucose to cellulose, which is produced as an extracellular component for mechanical and chemical protection at the onset of the stationary phase, when the cells exhibit multicellular behavior (rdar morphotype). Coexpression of cellulose and thin aggregative fimbriae (curli fimbrae or fibers) leads to a hydrophobic network with tightly packed cells embedded in a highly inert matrix that confers cohesion, elasticity and tissue-like properties to colonies. The polypeptide is Cellulose synthase catalytic subunit [UDP-forming] (bcsA) (Escherichia coli (strain K12)).